Here is a 351-residue protein sequence, read N- to C-terminus: Photosystem II D2 protein 2 (351 aa).

The helical transmembrane segment at 39–59 (CAFLSIGGWFTGTTFVTSWYT) threads the bilayer. H116 serves as a coordination point for chlorophyll a. The chain crosses the membrane as a helical span at residues 123-139 (GFMLRQFEIARLVNVRP). The pheophytin a site is built by Q128 and N141. A helical transmembrane segment spans residues 151-164 (VFVSVFLMYPLGQS). Residue H196 coordinates chlorophyll a. The chain crosses the membrane as a helical span at residues 206-226 (GALLCAIHGATVENTLFEDTK). 2 residues coordinate a plastoquinone: H213 and F260. Position 213 (H213) interacts with Fe cation. H267 is a Fe cation binding site. A helical membrane pass occupies residues 277–293 (GLWASAIGLVGIALNMR).

The protein belongs to the reaction center PufL/M/PsbA/D family. PSII is composed of 1 copy each of membrane proteins PsbA, PsbB, PsbC, PsbD, PsbE, PsbF, PsbH, PsbI, PsbJ, PsbK, PsbL, PsbM, PsbT, PsbX, PsbY, PsbZ, Psb30/Ycf12, peripheral proteins PsbO, CyanoQ (PsbQ), PsbU, PsbV and a large number of cofactors. It forms dimeric complexes. The cofactor is The D1/D2 heterodimer binds P680, chlorophylls that are the primary electron donor of PSII, and subsequent electron acceptors. It shares a non-heme iron and each subunit binds pheophytin, quinone, additional chlorophylls, carotenoids and lipids. There is also a Cl(-1) ion associated with D1 and D2, which is required for oxygen evolution. The PSII complex binds additional chlorophylls, carotenoids and specific lipids..

It is found in the cellular thylakoid membrane. The catalysed reaction is 2 a plastoquinone + 4 hnu + 2 H2O = 2 a plastoquinol + O2. In terms of biological role, photosystem II (PSII) is a light-driven water:plastoquinone oxidoreductase that uses light energy to abstract electrons from H(2)O, generating O(2) and a proton gradient subsequently used for ATP formation. It consists of a core antenna complex that captures photons, and an electron transfer chain that converts photonic excitation into a charge separation. The D1/D2 (PsbA/PsbD) reaction center heterodimer binds P680, the primary electron donor of PSII as well as several subsequent electron acceptors. D2 is needed for assembly of a stable PSII complex. In Acaryochloris marina (strain MBIC 11017), this protein is Photosystem II D2 protein 2.